The primary structure comprises 776 residues: DNA ligase (776 aa).

NAD(+) contacts are provided by residues 31–35, 80–81, and Glu112; these read DAEYD and SL. The N6-AMP-lysine intermediate role is filled by Lys114. NAD(+)-binding residues include Arg135, Glu172, Lys288, and Lys312. 4 residues coordinate Zn(2+): Cys406, Cys409, Cys436, and Cys442. The region spanning 693–776 is the BRCT domain; sequence AEGLPLAGQT…TFLAEQGIAV (84 aa).

This sequence belongs to the NAD-dependent DNA ligase family. LigA subfamily. Mg(2+) is required as a cofactor. It depends on Mn(2+) as a cofactor.

It catalyses the reaction NAD(+) + (deoxyribonucleotide)n-3'-hydroxyl + 5'-phospho-(deoxyribonucleotide)m = (deoxyribonucleotide)n+m + AMP + beta-nicotinamide D-nucleotide.. Functionally, DNA ligase that catalyzes the formation of phosphodiester linkages between 5'-phosphoryl and 3'-hydroxyl groups in double-stranded DNA using NAD as a coenzyme and as the energy source for the reaction. It is essential for DNA replication and repair of damaged DNA. This Pseudomonas putida (strain ATCC 47054 / DSM 6125 / CFBP 8728 / NCIMB 11950 / KT2440) protein is DNA ligase.